A 446-amino-acid chain; its full sequence is Chromosomal replication initiator protein DnaA (446 aa).

The interval 1–72 is domain I, interacts with DnaA modulators; it reads MENILDLWNK…ADTIYELTGE (72 aa). The tract at residues 72–109 is domain II; sequence EELSIKFIIPQNQDEVEAMPKSPIKKMSKEDPVDIPQN. Residues 110-326 are domain III, AAA+ region; that stretch reads MLNPKYTFDT…GALIRVVAYS (217 aa). ATP is bound by residues glycine 154, glycine 156, lysine 157, and threonine 158. Positions 327–446 are domain IV, binds dsDNA; that stretch reads SLINKDINAD…HVKEIKEQLK (120 aa).

This sequence belongs to the DnaA family. In terms of assembly, oligomerizes as a right-handed, spiral filament on DNA at oriC.

It localises to the cytoplasm. In terms of biological role, plays an essential role in the initiation and regulation of chromosomal replication. ATP-DnaA binds to the origin of replication (oriC) to initiate formation of the DNA replication initiation complex once per cell cycle. Binds the DnaA box (a 9 base pair repeat at the origin) and separates the double-stranded (ds)DNA. Forms a right-handed helical filament on oriC DNA; dsDNA binds to the exterior of the filament while single-stranded (ss)DNA is stabiized in the filament's interior. The ATP-DnaA-oriC complex binds and stabilizes one strand of the AT-rich DNA unwinding element (DUE), permitting loading of DNA polymerase. After initiation quickly degrades to an ADP-DnaA complex that is not apt for DNA replication. Binds acidic phospholipids. The protein is Chromosomal replication initiator protein DnaA of Bacillus pumilus (strain SAFR-032).